A 432-amino-acid polypeptide reads, in one-letter code: Adenylosuccinate synthetase (432 aa).

GTP-binding positions include 13-19 and 41-43; these read GDEGKGK and GHT. Aspartate 14 serves as the catalytic Proton acceptor. Aspartate 14 and glycine 41 together coordinate Mg(2+). IMP contacts are provided by residues 14–17, 39–42, threonine 130, arginine 144, glutamine 225, threonine 240, and arginine 304; these read DEGK and NAGH. Histidine 42 (proton donor) is an active-site residue. 300-306 provides a ligand contact to substrate; that stretch reads ATTGRRR. Residues arginine 306, 332–334, and 415–417 each bind GTP; these read KLD and STG.

Belongs to the adenylosuccinate synthetase family. In terms of assembly, homodimer. The cofactor is Mg(2+).

The protein resides in the cytoplasm. It carries out the reaction IMP + L-aspartate + GTP = N(6)-(1,2-dicarboxyethyl)-AMP + GDP + phosphate + 2 H(+). It participates in purine metabolism; AMP biosynthesis via de novo pathway; AMP from IMP: step 1/2. Plays an important role in the de novo pathway of purine nucleotide biosynthesis. Catalyzes the first committed step in the biosynthesis of AMP from IMP. This Citrobacter koseri (strain ATCC BAA-895 / CDC 4225-83 / SGSC4696) protein is Adenylosuccinate synthetase.